The following is a 272-amino-acid chain: Undecaprenyl-diphosphatase (272 aa).

A run of 8 helical transmembrane segments spans residues 1–21, 38–58, 84–104, 112–132, 145–165, 183–203, 219–239, and 250–270; these read MSYL…FLPI, PGAT…VVFF, VRMG…GYLF, FRSL…LGLA, MTYG…VPGV, PVAA…SGLY, QTAV…AGLM, and FVVY…TGAI.

Belongs to the UppP family.

The protein localises to the cell membrane. The enzyme catalyses di-trans,octa-cis-undecaprenyl diphosphate + H2O = di-trans,octa-cis-undecaprenyl phosphate + phosphate + H(+). Functionally, catalyzes the dephosphorylation of undecaprenyl diphosphate (UPP). Confers resistance to bacitracin. In Clavibacter michiganensis subsp. michiganensis (strain NCPPB 382), this protein is Undecaprenyl-diphosphatase.